A 129-amino-acid polypeptide reads, in one-letter code: Small ribosomal subunit protein uS11 (129 aa).

This sequence belongs to the universal ribosomal protein uS11 family. As to quaternary structure, part of the 30S ribosomal subunit. Interacts with proteins S7 and S18. Binds to IF-3.

Located on the platform of the 30S subunit, it bridges several disparate RNA helices of the 16S rRNA. Forms part of the Shine-Dalgarno cleft in the 70S ribosome. The protein is Small ribosomal subunit protein uS11 of Stenotrophomonas maltophilia (strain R551-3).